The following is a 379-amino-acid chain: GDP-mannose transporter 1 (379 aa).

Topologically, residues 1–39 (MTDNRKPEDYTIEMDKLGQNKNYQAPPPPPQPRSSTASS) are cytoplasmic. Residues 17–38 (LGQNKNYQAPPPPPQPRSSTAS) are disordered. A helical membrane pass occupies residues 40 to 60 (ISNNAALSVLAYCGSSILMTV). Residues 61–69 (MNKYVLSSD) are Lumenal-facing. Residues 70–90 (FNLNFFLLCVQSLVCIIAIQL) form a helical membrane-spanning segment. At 91–110 (CKACGLITYRDFNLDEARKW) the chain is on the cytoplasmic side. The chain crosses the membrane as a helical span at residues 111-133 (FPITLLLIGMIYTGSKALQFLSI). The Lumenal segment spans residues 134–136 (PVY). A helical membrane pass occupies residues 137-156 (TIFKNLTIILIAYGEVLWFG). The Cytoplasmic segment spans residues 157 to 162 (GSVTNL). The helical transmembrane segment at 163–182 (TLFSFGLMVFSSIIAAWADI) threads the bilayer. At 183–198 (KHAIESSGDATSKVST) the chain is on the lumenal side. Residues 199 to 219 (LNAGYIWMLINCLCTSSYVLG) form a helical membrane-spanning segment. Residues 220–233 (MRKRIKLTNFKDFD) are Cytoplasmic-facing. The chain crosses the membrane as a helical span at residues 234–254 (TMFYNNLLSIPVLIVCSGILE). Residues 255 to 272 (DWSPANVARNFPSADRNG) are Lumenal-facing. Residues 273-293 (IMFAMILSGLSTVFISYTSAW) traverse the membrane as a helical segment. Residues 294 to 301 (CVRVTSST) lie on the Cytoplasmic side of the membrane. Residues 302 to 322 (TYSMVGALNKLPIALSGLIFF) traverse the membrane as a helical segment. Topologically, residues 323–325 (DAP) are lumenal. A helical membrane pass occupies residues 326 to 346 (VTFPSVSAIMVGFVSGIVYAV). Residues 347–379 (AKIKQNAKPKVGILPTTNPVSASSQSMRDSLRS) are Cytoplasmic-facing.

This sequence belongs to the TPT transporter family. SLC35D subfamily. As to quaternary structure, homooligomer.

The protein localises to the golgi apparatus membrane. Its subcellular location is the cytoplasmic vesicle membrane. It localises to the endoplasmic reticulum membrane. Its function is as follows. Involved in the import of GDP-mannose from the cytoplasm into the Golgi lumen. In Emericella nidulans (strain FGSC A4 / ATCC 38163 / CBS 112.46 / NRRL 194 / M139) (Aspergillus nidulans), this protein is GDP-mannose transporter 1 (gmt1).